A 372-amino-acid chain; its full sequence is uncharacterized protein (372 aa).

Residues 1-33 (MVRRALRLAAGTASLAAGTWLLRALHGTPAALG) form the signal peptide.

It to K.pneumoniae RomA.

This is an uncharacterized protein from Mycobacterium bovis (strain ATCC BAA-935 / AF2122/97).